Reading from the N-terminus, the 698-residue chain is Putative transposon gamma-delta 80.3 kDa protein (698 aa).

This is Putative transposon gamma-delta 80.3 kDa protein (tnpX) from Escherichia coli (strain K12).